The following is a 427-amino-acid chain: Trigger factor (427 aa).

The PPIase FKBP-type domain occupies 163-248 (GDTVVIDFVG…IHEVKAKEVP (86 aa)).

The protein belongs to the FKBP-type PPIase family. Tig subfamily.

The protein localises to the cytoplasm. It carries out the reaction [protein]-peptidylproline (omega=180) = [protein]-peptidylproline (omega=0). Its function is as follows. Involved in protein export. Acts as a chaperone by maintaining the newly synthesized protein in an open conformation. Functions as a peptidyl-prolyl cis-trans isomerase. The polypeptide is Trigger factor (Streptococcus pneumoniae serotype 4 (strain ATCC BAA-334 / TIGR4)).